Here is a 433-residue protein sequence, read N- to C-terminus: sn-glycerol-3-phosphate-binding periplasmic protein UgpB (433 aa).

Residues 1–25 (MFTRLITTSALTGAIALTIGSQAFA) form the signal peptide. Sn-glycerol 3-phosphate-binding residues include Tyr-67, Asp-91, Ser-146, Ser-273, Gly-307, Tyr-346, and Arg-397.

It belongs to the bacterial solute-binding protein 1 family. In terms of assembly, the complex is composed of two ATP-binding proteins (UgpC), two transmembrane proteins (UgpA and UgpE) and a solute-binding protein (UgpB).

It localises to the periplasm. Part of the ABC transporter complex UgpBAEC involved in sn-glycerol-3-phosphate (G3P) import. Binds G3P. The sequence is that of sn-glycerol-3-phosphate-binding periplasmic protein UgpB (ugpB) from Brucella melitensis biotype 1 (strain ATCC 23456 / CCUG 17765 / NCTC 10094 / 16M).